We begin with the raw amino-acid sequence, 236 residues long: uncharacterized protein (236 aa).

Positions 1–26 (MTNTWNRLALLIFAVLSLLVAGELQA) are cleaved as a signal peptide.

Belongs to the periplasmic pilus chaperone family.

It localises to the periplasm. Functionally, part of the elfADCG-ycbUVF fimbrial operon, which promotes adhesion of bacteria to different abiotic surfaces. Could be required for the biogenesis of fimbriae. This is an uncharacterized protein from Escherichia coli (strain K12).